The chain runs to 336 residues: D-alanine--D-alanine ligase (336 aa).

Positions K124–K330 constitute an ATP-grasp domain. A154 to E209 contributes to the ATP binding site. Mg(2+)-binding residues include D284, E297, and N299.

The protein belongs to the D-alanine--D-alanine ligase family. Mg(2+) serves as cofactor. It depends on Mn(2+) as a cofactor.

The protein resides in the cytoplasm. The enzyme catalyses 2 D-alanine + ATP = D-alanyl-D-alanine + ADP + phosphate + H(+). It functions in the pathway cell wall biogenesis; peptidoglycan biosynthesis. Functionally, cell wall formation. In Shewanella sp. (strain MR-7), this protein is D-alanine--D-alanine ligase.